Here is a 346-residue protein sequence, read N- to C-terminus: Ribosomal RNA small subunit methyltransferase H (346 aa).

S-adenosyl-L-methionine-binding positions include 53 to 55 (GGY), Asp-70, Phe-97, Asp-114, and Gln-121.

The protein belongs to the methyltransferase superfamily. RsmH family.

Its subcellular location is the cytoplasm. It carries out the reaction cytidine(1402) in 16S rRNA + S-adenosyl-L-methionine = N(4)-methylcytidine(1402) in 16S rRNA + S-adenosyl-L-homocysteine + H(+). Functionally, specifically methylates the N4 position of cytidine in position 1402 (C1402) of 16S rRNA. The sequence is that of Ribosomal RNA small subunit methyltransferase H from Bartonella henselae (strain ATCC 49882 / DSM 28221 / CCUG 30454 / Houston 1) (Rochalimaea henselae).